The sequence spans 195 residues: Peptidyl-tRNA hydrolase (195 aa).

Tyrosine 18 is a binding site for tRNA. Histidine 23 functions as the Proton acceptor in the catalytic mechanism. TRNA-binding residues include phenylalanine 69, asparagine 71, and asparagine 117.

The protein belongs to the PTH family. Monomer.

It localises to the cytoplasm. The enzyme catalyses an N-acyl-L-alpha-aminoacyl-tRNA + H2O = an N-acyl-L-amino acid + a tRNA + H(+). Hydrolyzes ribosome-free peptidyl-tRNAs (with 1 or more amino acids incorporated), which drop off the ribosome during protein synthesis, or as a result of ribosome stalling. Functionally, catalyzes the release of premature peptidyl moieties from peptidyl-tRNA molecules trapped in stalled 50S ribosomal subunits, and thus maintains levels of free tRNAs and 50S ribosomes. The chain is Peptidyl-tRNA hydrolase from Hahella chejuensis (strain KCTC 2396).